The sequence spans 189 residues: UPF0301 protein RAF_ORF0041 (189 aa).

The protein belongs to the UPF0301 (AlgH) family.

The polypeptide is UPF0301 protein RAF_ORF0041 (Rickettsia africae (strain ESF-5)).